A 360-amino-acid chain; its full sequence is Uroporphyrinogen decarboxylase (360 aa).

Substrate contacts are provided by residues 31–35, D81, Y157, T212, and H333; that span reads RQAGR.

The protein belongs to the uroporphyrinogen decarboxylase family. In terms of assembly, homodimer.

The protein resides in the cytoplasm. The catalysed reaction is uroporphyrinogen III + 4 H(+) = coproporphyrinogen III + 4 CO2. The protein operates within porphyrin-containing compound metabolism; protoporphyrin-IX biosynthesis; coproporphyrinogen-III from 5-aminolevulinate: step 4/4. Catalyzes the decarboxylation of four acetate groups of uroporphyrinogen-III to yield coproporphyrinogen-III. In Janthinobacterium sp. (strain Marseille) (Minibacterium massiliensis), this protein is Uroporphyrinogen decarboxylase.